Reading from the N-terminus, the 1023-residue chain is 2-oxoglutarate dehydrogenase complex component E1 (1023 aa).

Residues 1–40 constitute a mitochondrion transit peptide; that stretch reads MFHLRTCAAKLRPLTASQTVKTFSQNRPAAARTFGQIRCY. Lysine 74 is subject to N6-succinyllysine. A Phosphoserine modification is found at serine 100. Histidine 143, aspartate 156, and aspartate 158 together coordinate Ca(2+). Arginine 312 contributes to the thiamine diphosphate binding site. Lysine 401 carries the N6-acetyllysine modification. Residues aspartate 411, asparagine 444, and isoleucine 446 each contribute to the thiamine diphosphate site. Residues aspartate 411, asparagine 444, and isoleucine 446 each coordinate Mg(2+). Lysine 534 participates in a covalent cross-link: Glycyl lysine isopeptide (Lys-Gly) (interchain with G-Cter in ubiquitin). N6-succinyllysine is present on lysine 564. Glutamine 676 provides a ligand contact to thiamine diphosphate. An N6-acetyllysine modification is found at lysine 970.

Belongs to the alpha-ketoglutarate dehydrogenase family. As to quaternary structure, homodimer. The 2-oxoglutarate dehydrogenase complex is composed of OGDH (2-oxoglutarate dehydrogenase; E1), DLST (dihydrolipoamide succinyltransferase; E2), DLD (dihydrolipoamide dehydrogenase; E3) and the assembly factor KGD4. It contains multiple copies of the three enzymatic components (E1, E2 and E3). In the nucleus, the 2-oxoglutarate dehydrogenase complex associates with KAT2A. Interacts with ABHD11; this interaction maintains the functional lipoylation of the 2-oxoglutarate dehydrogenase complex. Thiamine diphosphate is required as a cofactor. The cofactor is Mg(2+).

It localises to the mitochondrion. Its subcellular location is the nucleus. It carries out the reaction N(6)-[(R)-lipoyl]-L-lysyl-[protein] + 2-oxoglutarate + H(+) = N(6)-[(R)-S(8)-succinyldihydrolipoyl]-L-lysyl-[protein] + CO2. Its activity is regulated as follows. Calcium ions and ADP stimulate, whereas ATP and NADH reduce catalytic activity. Functionally, 2-oxoglutarate dehydrogenase (E1o) component of the 2-oxoglutarate dehydrogenase complex (OGDHC). Participates in the first step, rate limiting for the overall conversion of 2-oxoglutarate to succinyl-CoA and CO(2) catalyzed by the whole OGDHC. Catalyzes the irreversible decarboxylation of 2-oxoglutarate (alpha-ketoglutarate) via the thiamine diphosphate (ThDP) cofactor and subsequent transfer of the decarboxylated acyl intermediate on an oxidized dihydrolipoyl group that is covalently amidated to the E2 enzyme (dihydrolipoyllysine-residue succinyltransferase or DLST). Plays a key role in the Krebs (citric acid) cycle, which is a common pathway for oxidation of fuel molecules, including carbohydrates, fatty acids, and amino acids. Can catalyze the decarboxylation of 2-oxoadipate in vitro, but at a much lower rate than 2-oxoglutarate. Mainly active in the mitochondrion. A fraction of the 2-oxoglutarate dehydrogenase complex also localizes in the nucleus and is required for lysine succinylation of histones: associates with KAT2A on chromatin and provides succinyl-CoA to histone succinyltransferase KAT2A. This is 2-oxoglutarate dehydrogenase complex component E1 from Bos taurus (Bovine).